A 228-amino-acid polypeptide reads, in one-letter code: Demethylmenaquinone methyltransferase (228 aa).

S-adenosyl-L-methionine contacts are provided by residues threonine 62, aspartate 80, 100-101, and serine 117; that span reads DA.

It belongs to the class I-like SAM-binding methyltransferase superfamily. MenG/UbiE family.

The catalysed reaction is a 2-demethylmenaquinol + S-adenosyl-L-methionine = a menaquinol + S-adenosyl-L-homocysteine + H(+). Its pathway is quinol/quinone metabolism; menaquinone biosynthesis; menaquinol from 1,4-dihydroxy-2-naphthoate: step 2/2. Functionally, methyltransferase required for the conversion of demethylmenaquinol (DMKH2) to menaquinol (MKH2). The polypeptide is Demethylmenaquinone methyltransferase (Mycolicibacterium gilvum (strain PYR-GCK) (Mycobacterium gilvum (strain PYR-GCK))).